The chain runs to 899 residues: Ewing's tumor-associated antigen 1 homolog (899 aa).

The disordered stretch occupies residues 1-82; it reads MSRRRKHGDS…TEERYETPKR (82 aa). Positions 71–81 are enriched in basic and acidic residues; sequence SNTEERYETPK. The ATR-activation domain (AAD) signature appears at 105 to 111; that stretch reads IFWDQNS. The stretch at 180 to 210 forms a coiled coil; sequence TKLKSQNQEEELMKLAKQFDKNMEELDVIQE. Residues Lys416 and Lys444 each participate in a glycyl lysine isopeptide (Lys-Gly) (interchain with G-Cter in SUMO2) cross-link. Ser467 carries the post-translational modification Phosphoserine. Residues Lys485 and Lys539 each participate in a glycyl lysine isopeptide (Lys-Gly) (interchain with G-Cter in SUMO2) cross-link. The short motif at 607-622 is the RBM1 motif element; sequence DDVDDDILYQACDDIE. The residue at position 810 (Ser810) is a Phosphoserine. The disordered stretch occupies residues 833–899; it reads NKTVNPLPGK…AQASSVKKGR (67 aa). The span at 859-877 shows a compositional bias: basic and acidic residues; sequence PSKEEEEKNRKCSPEEIQR. Positions 868–890 match the RBM2 motif motif; sequence RKCSPEEIQRKRQAALIRRMAKA.

As to quaternary structure, interacts (via RBM1 motif) with RPA1. Interacts (via RBM2 motif) with RPA2. Interacts (via the ATR-activation domain motif) with ATR. Phosphorylated by ATR.

It is found in the nucleus. Its function is as follows. Replication stress response protein that accumulates at DNA damage sites and promotes replication fork progression and integrity. Recruited to stalled replication forks via interaction with the RPA complex and directly stimulates ATR kinase activity independently of TOPBP1. Probably only regulates a subset of ATR targets. The sequence is that of Ewing's tumor-associated antigen 1 homolog from Bos taurus (Bovine).